The chain runs to 122 residues: Large ribosomal subunit protein uL18 (122 aa).

This sequence belongs to the universal ribosomal protein uL18 family. Part of the 50S ribosomal subunit; part of the 5S rRNA/L5/L18/L25 subcomplex. Contacts the 5S and 23S rRNAs.

In terms of biological role, this is one of the proteins that bind and probably mediate the attachment of the 5S RNA into the large ribosomal subunit, where it forms part of the central protuberance. In Lachnoclostridium phytofermentans (strain ATCC 700394 / DSM 18823 / ISDg) (Clostridium phytofermentans), this protein is Large ribosomal subunit protein uL18.